The following is a 750-amino-acid chain: Photosystem I P700 chlorophyll a apoprotein A1 (750 aa).

The next 8 helical transmembrane spans lie at Val70–Ala93, Leu156–His179, Leu195–Leu219, Ile291–Tyr309, Trp346–Tyr369, Leu385–Val411, Ala433–His455, and Phe531–Leu549. [4Fe-4S] cluster-binding residues include Cys573 and Cys582. The next 2 helical transmembrane spans lie at His589 to Trp610 and Leu664 to Phe686. His675 is a chlorophyll a' binding site. Met683 and Tyr691 together coordinate chlorophyll a. Phylloquinone is bound at residue Trp692. The chain crosses the membrane as a helical span at residues Ala724–Ala744.

This sequence belongs to the PsaA/PsaB family. The PsaA/B heterodimer binds the P700 chlorophyll special pair and subsequent electron acceptors. PSI consists of a core antenna complex that captures photons, and an electron transfer chain that converts photonic excitation into a charge separation. The eukaryotic PSI reaction center is composed of at least 11 subunits. P700 is a chlorophyll a/chlorophyll a' dimer, A0 is one or more chlorophyll a, A1 is one or both phylloquinones and FX is a shared 4Fe-4S iron-sulfur center. is required as a cofactor.

The protein localises to the plastid. It is found in the chloroplast thylakoid membrane. The catalysed reaction is reduced [plastocyanin] + hnu + oxidized [2Fe-2S]-[ferredoxin] = oxidized [plastocyanin] + reduced [2Fe-2S]-[ferredoxin]. Functionally, psaA and PsaB bind P700, the primary electron donor of photosystem I (PSI), as well as the electron acceptors A0, A1 and FX. PSI is a plastocyanin-ferredoxin oxidoreductase, converting photonic excitation into a charge separation, which transfers an electron from the donor P700 chlorophyll pair to the spectroscopically characterized acceptors A0, A1, FX, FA and FB in turn. Oxidized P700 is reduced on the lumenal side of the thylakoid membrane by plastocyanin. This Acorus calamus (Sweet flag) protein is Photosystem I P700 chlorophyll a apoprotein A1.